The following is a 114-amino-acid chain: Fumarate reductase subunit D (114 aa).

3 consecutive transmembrane segments (helical) span residues 24-44 (VSAI…PFGL), 50-70 (LITF…TIFP), and 92-112 (GGFI…FAVI).

It belongs to the FrdD family. As to quaternary structure, part of an enzyme complex containing four subunits: a flavoprotein (FrdA), an iron-sulfur protein (FrdB), and two hydrophobic anchor proteins (FrdC and FrdD).

The protein resides in the cell inner membrane. Functionally, anchors the catalytic components of the fumarate reductase complex to the cell membrane, binds quinones. This Haemophilus influenzae (strain 86-028NP) protein is Fumarate reductase subunit D.